The chain runs to 412 residues: UPF0761 membrane protein lpg0643 (412 aa).

A run of 6 helical transmembrane segments spans residues 36 to 56 (ALAF…LAIF), 99 to 119 (LSIW…FTIE), 137 to 157 (AFLL…LSLA), 177 to 197 (ILHY…YVVV), 210 to 230 (GGLV…YYLI), and 241 to 261 (AFAT…ITLL).

Belongs to the UPF0761 family.

The protein resides in the cell inner membrane. The polypeptide is UPF0761 membrane protein lpg0643 (Legionella pneumophila subsp. pneumophila (strain Philadelphia 1 / ATCC 33152 / DSM 7513)).